The chain runs to 306 residues: Aspartate carbamoyltransferase catalytic subunit (306 aa).

Residues arginine 51 and threonine 52 each contribute to the carbamoyl phosphate site. Lysine 79 is a binding site for L-aspartate. Residues arginine 101, histidine 130, and glutamine 133 each contribute to the carbamoyl phosphate site. Residues arginine 163 and arginine 215 each contribute to the L-aspartate site. Carbamoyl phosphate-binding residues include glycine 256 and proline 257.

This sequence belongs to the aspartate/ornithine carbamoyltransferase superfamily. ATCase family. Heterododecamer (2C3:3R2) of six catalytic PyrB chains organized as two trimers (C3), and six regulatory PyrI chains organized as three dimers (R2).

The enzyme catalyses carbamoyl phosphate + L-aspartate = N-carbamoyl-L-aspartate + phosphate + H(+). The protein operates within pyrimidine metabolism; UMP biosynthesis via de novo pathway; (S)-dihydroorotate from bicarbonate: step 2/3. Functionally, catalyzes the condensation of carbamoyl phosphate and aspartate to form carbamoyl aspartate and inorganic phosphate, the committed step in the de novo pyrimidine nucleotide biosynthesis pathway. The protein is Aspartate carbamoyltransferase catalytic subunit of Ehrlichia ruminantium (strain Welgevonden).